The sequence spans 365 residues: Flagellar P-ring protein (365 aa).

The signal sequence occupies residues M1–A19.

It belongs to the FlgI family. In terms of assembly, the basal body constitutes a major portion of the flagellar organelle and consists of four rings (L,P,S, and M) mounted on a central rod.

The protein localises to the periplasm. It is found in the bacterial flagellum basal body. In terms of biological role, assembles around the rod to form the L-ring and probably protects the motor/basal body from shearing forces during rotation. In Escherichia coli O81 (strain ED1a), this protein is Flagellar P-ring protein.